The following is a 364-amino-acid chain: Protein-glutamate methylesterase/protein-glutamine glutaminase (364 aa).

Residues 7 to 124 enclose the Response regulatory domain; the sequence is RALIVDDSAL…SQNMPDMAEE (118 aa). D58 carries the post-translational modification 4-aspartylphosphate. The region spanning 167–364 is the CheB-type methylesterase domain; that stretch reads ETTSFVRNVL…MAEEIVKIIS (198 aa). Residues S181, H208, and D308 contribute to the active site.

It belongs to the CheB family. In terms of processing, phosphorylated by CheA. Phosphorylation of the N-terminal regulatory domain activates the methylesterase activity.

The protein localises to the cytoplasm. The enzyme catalyses [protein]-L-glutamate 5-O-methyl ester + H2O = L-glutamyl-[protein] + methanol + H(+). It carries out the reaction L-glutaminyl-[protein] + H2O = L-glutamyl-[protein] + NH4(+). In terms of biological role, involved in chemotaxis. Part of a chemotaxis signal transduction system that modulates chemotaxis in response to various stimuli. Catalyzes the demethylation of specific methylglutamate residues introduced into the chemoreceptors (methyl-accepting chemotaxis proteins or MCP) by CheR. Also mediates the irreversible deamidation of specific glutamine residues to glutamic acid. This chain is Protein-glutamate methylesterase/protein-glutamine glutaminase, found in Methanosarcina barkeri (strain Fusaro / DSM 804).